The chain runs to 145 residues: D-aminoacyl-tRNA deacylase (145 aa).

A Gly-cisPro motif, important for rejection of L-amino acids motif is present at residues 137–138 (GP).

Belongs to the DTD family. As to quaternary structure, homodimer.

It localises to the cytoplasm. It catalyses the reaction glycyl-tRNA(Ala) + H2O = tRNA(Ala) + glycine + H(+). The catalysed reaction is a D-aminoacyl-tRNA + H2O = a tRNA + a D-alpha-amino acid + H(+). In terms of biological role, an aminoacyl-tRNA editing enzyme that deacylates mischarged D-aminoacyl-tRNAs. Also deacylates mischarged glycyl-tRNA(Ala), protecting cells against glycine mischarging by AlaRS. Acts via tRNA-based rather than protein-based catalysis; rejects L-amino acids rather than detecting D-amino acids in the active site. By recycling D-aminoacyl-tRNA to D-amino acids and free tRNA molecules, this enzyme counteracts the toxicity associated with the formation of D-aminoacyl-tRNA entities in vivo and helps enforce protein L-homochirality. The polypeptide is D-aminoacyl-tRNA deacylase (Erwinia tasmaniensis (strain DSM 17950 / CFBP 7177 / CIP 109463 / NCPPB 4357 / Et1/99)).